The sequence spans 485 residues: MEKQVRVRYAPSPTGHLHIGNARTALFNYLFARHQDGKFIIRIEDTDVKRNVAGGEESQLKYLKWLGMDWDEGVDVGGEFGPYRQTERLDIYKKLYEDLLERGLAYKCYMTEEELEAEREGQIARGETPRYAGNHRDLTEAQVKEFEAEGRIPSIRFRVPADRDYTFKDIVKDEVAFHSNDFGDFVIVKKDGIPTYNFAVAVDDHLMEITHVLRGDDHISNTPKQMMIYEAFGWDIPQFGHMTLIVNESRKKLSKRDESIIQFIEQYKELGYLPEAIFNFIALLGWSPVGEEEIFSQEEFIKMFDAARLSKSPALFDSQKLKWMNNQYMKKQDLDTVVELSLPHLVKAGRIGETLSEQEQAWIRDVIALYHEQMSFGAEIVELSEMFFKDHVDYEEEGQEVLKGEQVPEVLRAFAGQVEALEAMEPAAIKAAIKAVQKETGHKGKNLFMPIRVATTGQTHGPELPNAIALLGKEKVLXRLQKVIG.

The short motif at 11-21 (PSPTGHLHIGN) is the 'HIGH' region element. Residues 252-256 (KLSKR) carry the 'KMSKS' region motif. An ATP-binding site is contributed by Lys255.

This sequence belongs to the class-I aminoacyl-tRNA synthetase family. Glutamate--tRNA ligase type 1 subfamily. In terms of assembly, monomer.

It localises to the cytoplasm. The catalysed reaction is tRNA(Glu) + L-glutamate + ATP = L-glutamyl-tRNA(Glu) + AMP + diphosphate. Its function is as follows. Catalyzes the attachment of glutamate to tRNA(Glu) in a two-step reaction: glutamate is first activated by ATP to form Glu-AMP and then transferred to the acceptor end of tRNA(Glu). The sequence is that of Glutamate--tRNA ligase from Bacillus cereus (strain ATCC 10987 / NRS 248).